A 289-amino-acid chain; its full sequence is Acetyl-coenzyme A carboxylase carboxyl transferase subunit beta (289 aa).

The region spanning 28–289 (VMTKCPKCKK…QGGEMAVWQS (262 aa)) is the CoA carboxyltransferase N-terminal domain. Zn(2+)-binding residues include cysteine 32, cysteine 35, cysteine 51, and cysteine 54. Residues 32–54 (CPKCKKIMYTKEVLKNLKVCVNC) form a C4-type zinc finger.

Belongs to the AccD/PCCB family. In terms of assembly, acetyl-CoA carboxylase is a heterohexamer composed of biotin carboxyl carrier protein (AccB), biotin carboxylase (AccC) and two subunits each of ACCase subunit alpha (AccA) and ACCase subunit beta (AccD). Requires Zn(2+) as cofactor.

It localises to the cytoplasm. It carries out the reaction N(6)-carboxybiotinyl-L-lysyl-[protein] + acetyl-CoA = N(6)-biotinyl-L-lysyl-[protein] + malonyl-CoA. It functions in the pathway lipid metabolism; malonyl-CoA biosynthesis; malonyl-CoA from acetyl-CoA: step 1/1. In terms of biological role, component of the acetyl coenzyme A carboxylase (ACC) complex. Biotin carboxylase (BC) catalyzes the carboxylation of biotin on its carrier protein (BCCP) and then the CO(2) group is transferred by the transcarboxylase to acetyl-CoA to form malonyl-CoA. The chain is Acetyl-coenzyme A carboxylase carboxyl transferase subunit beta from Bacillus cereus (strain ZK / E33L).